The following is a 265-amino-acid chain: Phosphatidylglycerol--prolipoprotein diacylglyceryl transferase (265 aa).

4 consecutive transmembrane segments (helical) span residues 10–30 (VAIA…LIGI), 56–76 (LVFW…VLFY), 87–107 (LILQ…GVLL), and 117–137 (GKGF…GLGA). Residue Arg139 participates in a 1,2-diacyl-sn-glycero-3-phospho-(1'-sn-glycerol) binding. Helical transmembrane passes span 172–192 (PSQL…LWFY), 200–220 (MAVS…VEFV), and 227–247 (LGYL…PMIL).

It belongs to the Lgt family.

It localises to the cell inner membrane. It catalyses the reaction L-cysteinyl-[prolipoprotein] + a 1,2-diacyl-sn-glycero-3-phospho-(1'-sn-glycerol) = an S-1,2-diacyl-sn-glyceryl-L-cysteinyl-[prolipoprotein] + sn-glycerol 1-phosphate + H(+). The protein operates within protein modification; lipoprotein biosynthesis (diacylglyceryl transfer). Its function is as follows. Catalyzes the transfer of the diacylglyceryl group from phosphatidylglycerol to the sulfhydryl group of the N-terminal cysteine of a prolipoprotein, the first step in the formation of mature lipoproteins. The polypeptide is Phosphatidylglycerol--prolipoprotein diacylglyceryl transferase (Azotobacter vinelandii (strain DJ / ATCC BAA-1303)).